We begin with the raw amino-acid sequence, 497 residues long: Cytochrome P450 monooxygenase opdB (497 aa).

A helical transmembrane segment spans residues 26–46 (YLGAMAGSVILLISAFTLSLG). The tract at residues 69–90 (MSKFTRSRELSQQGEDAAGTEP) is disordered. Cysteine 454 is a binding site for heme.

Requires heme as cofactor.

Its subcellular location is the membrane. Its pathway is secondary metabolite biosynthesis. Its function is as follows. Cytochrome P450 monooxygenase; part of the gene cluster that mediates the biosynthesis of oxopyrrolidines, polyketide-amino acid hybrid compounds with feature structures of tetramic acid. Does not seem to play a role in oxopyrrolidines A and B biosynthesis. May be involved in further modifications of these oxopyrrolidines. The polypeptide is Cytochrome P450 monooxygenase opdB (Penicillium oxalicum (strain 114-2 / CGMCC 5302) (Penicillium decumbens)).